The following is a 126-amino-acid chain: Arginine decarboxylase proenzyme (126 aa).

Ser-74 serves as the catalytic Schiff-base intermediate with substrate; via pyruvic acid. Ser-74 is subject to Pyruvic acid (Ser); by autocatalysis. Catalysis depends on His-79, which acts as the Proton acceptor; for processing activity. Cys-94 serves as the catalytic Proton donor; for catalytic activity.

The protein belongs to the prokaryotic AdoMetDC family. Type 1 subfamily. Heterooctamer of four alpha and four beta chains arranged as a tetramer of alpha/beta heterodimers. Pyruvate is required as a cofactor. Post-translationally, is synthesized initially as an inactive proenzyme. Formation of the active enzyme involves a self-maturation process in which the active site pyruvoyl group is generated from an internal serine residue via an autocatalytic post-translational modification. Two non-identical subunits are generated from the proenzyme in this reaction, and the pyruvate is formed at the N-terminus of the alpha chain, which is derived from the carboxyl end of the proenzyme. The post-translation cleavage follows an unusual pathway, termed non-hydrolytic serinolysis, in which the side chain hydroxyl group of the serine supplies its oxygen atom to form the C-terminus of the beta chain, while the remainder of the serine residue undergoes an oxidative deamination to produce ammonia and the pyruvoyl group blocking the N-terminus of the alpha chain.

It carries out the reaction L-arginine + H(+) = agmatine + CO2. It participates in amine and polyamine biosynthesis; agmatine biosynthesis; agmatine from L-arginine: step 1/1. Functionally, specifically catalyzes the decarboxylation of L-arginine to agmatine. Has no S-adenosylmethionine decarboxylase (AdoMetDC) activity. The polypeptide is Arginine decarboxylase proenzyme (Pyrobaculum neutrophilum (strain DSM 2338 / JCM 9278 / NBRC 100436 / V24Sta) (Thermoproteus neutrophilus)).